A 329-amino-acid polypeptide reads, in one-letter code: uncharacterized protein (329 aa).

The segment at 109 to 147 (KALGNDQTSSMTSSTTAVTVAKSGDGQQQTGEQKEEDWK) is disordered. A compositionally biased stretch (low complexity) spans 116–131 (TSSMTSSTTAVTVAKS).

This sequence to the C-terminal of MG321/MPN_456.

This is an uncharacterized protein from Mycoplasma pneumoniae (strain ATCC 29342 / M129 / Subtype 1) (Mycoplasmoides pneumoniae).